We begin with the raw amino-acid sequence, 1625 residues long: Probable cation-transporting ATPase I (1625 aa).

8 helical membrane-spanning segments follow: residues 148-168 (VVSAVAADIFLAGSVSSPNSA), 177-197 (LAILVPLTAAAMDLVAMGATV), 358-378 (LIAAASALVAGGGTEDAAGAI), 637-657 (ASESAVHLAQGGTTLAGLLLV), 673-693 (WLNPVNAAAATALVSGMWSAA), 778-798 (ILAVGAAASAIVGSNIDALLV), 968-988 (LTSKVLPMTLAGGAAVTALAL), and 997-1017 (AVADGVAIAVAAVPEGLPLVA). Residue Asp1053 is the 4-aspartylphosphate intermediate of the active site. Mg(2+) contacts are provided by Asp1340 and Asp1344. 3 helical membrane passes run 1401-1421 (ILVGGNVGEVLFTVIGTAFGA), 1432-1452 (LLVNLLTDMFPALAVAVTSQF), and 1547-1567 (VIATALGSAGVLVGIIQTPVI).

It belongs to the cation transport ATPase (P-type) (TC 3.A.3) family.

It is found in the cell membrane. It carries out the reaction ATP + H2O = ADP + phosphate + H(+). This is Probable cation-transporting ATPase I (ctpI) from Mycobacterium tuberculosis (strain CDC 1551 / Oshkosh).